The following is a 181-amino-acid chain: GTP cyclohydrolase 1 2 (181 aa).

Belongs to the GTP cyclohydrolase I family. As to quaternary structure, homomer.

The enzyme catalyses GTP + H2O = 7,8-dihydroneopterin 3'-triphosphate + formate + H(+). It participates in cofactor biosynthesis; 7,8-dihydroneopterin triphosphate biosynthesis; 7,8-dihydroneopterin triphosphate from GTP: step 1/1. This is GTP cyclohydrolase 1 2 (folE2) from Pseudomonas aeruginosa (strain ATCC 15692 / DSM 22644 / CIP 104116 / JCM 14847 / LMG 12228 / 1C / PRS 101 / PAO1).